Consider the following 832-residue polypeptide: Receptor-interacting serine/threonine-protein kinase 4 (832 aa).

The 265-residue stretch at 22–286 (FTGWEKVGSG…QGNGLNGELI (265 aa)) folds into the Protein kinase domain. ATP contacts are provided by residues 28–36 (VGSGGFGQV) and Lys-51. Lys-51 participates in a covalent cross-link: Glycyl lysine isopeptide (Lys-Gly) (interchain with G-Cter in ubiquitin). Catalysis depends on Asp-143, which acts as the Proton acceptor. Lys-145 participates in a covalent cross-link: Glycyl lysine isopeptide (Lys-Gly) (interchain with G-Cter in ubiquitin). 2 disordered regions span residues 325–368 (QEIT…RLKR) and 389–424 (SGVS…GVSS). Residues 329 to 342 (SETEDLCEKPDDEV) are compositionally biased toward acidic residues. Positions 343–359 (KETAHDLDVKSPPEPRS) are enriched in basic and acidic residues. A compositionally biased stretch (low complexity) spans 403–424 (RSSSESKLPSSGSGKRLSGVSS). 10 ANK repeats span residues 485-514 (SGAS…NPNL), 518-547 (RGST…SVNA), 551-580 (DQWT…SVNE), 584-613 (EGRT…DVSL), 617-647 (DAWL…SVNA), 651-680 (DGRT…DVNV), 684-713 (LAQT…GKEA), 717-746 (DGYT…DVLA), 750-780 (LNQT…DLFD), and 782-811 (QGLS…HINL).

Belongs to the protein kinase superfamily. TKL Ser/Thr protein kinase family. As to quaternary structure, interacts with PRKCB. Interacts with TRAF1, TRAF2, TRAF3 and TRAF5. Interacts with BIRC2/c-IAP1, BIRC3/c-IAP2 and XIAP/BIRC4. Post-translationally, may be phosphorylated by MAP3K2 and MAP3K3. In terms of processing, proteolytically cleaved by during Fas-induced apoptosis. Cleavage at Asp-388 and Asp-426. Polyubiquitinated with 'Lys-48' and 'Lys-63'-linked chains by BIRC2/c-IAP1 and BIRC3/c-IAP2, leading to activation of NF-kappa-B. Expressed in hair follicles and skin.

The protein resides in the cytoplasm. The protein localises to the membrane. The catalysed reaction is L-seryl-[protein] + ATP = O-phospho-L-seryl-[protein] + ADP + H(+). It carries out the reaction L-threonyl-[protein] + ATP = O-phospho-L-threonyl-[protein] + ADP + H(+). Its function is as follows. Serine/threonine protein kinase. Required for embryonic skin development and correct skin homeostasis in adults, via phosphorylation of PKP1 and subsequent promotion of keratinocyte differentiation and cell adhesion. It is a direct transcriptional target of TP63. Plays a role in NF-kappa-B activation. This chain is Receptor-interacting serine/threonine-protein kinase 4 (RIPK4), found in Homo sapiens (Human).